A 104-amino-acid polypeptide reads, in one-letter code: Large ribosomal subunit protein bL21 (104 aa).

It belongs to the bacterial ribosomal protein bL21 family. Part of the 50S ribosomal subunit. Contacts protein L20.

Functionally, this protein binds to 23S rRNA in the presence of protein L20. The chain is Large ribosomal subunit protein bL21 from Clostridium botulinum (strain 657 / Type Ba4).